We begin with the raw amino-acid sequence, 215 residues long: Cytochrome b6 (215 aa).

The helical transmembrane segment at 32–52 threads the bilayer; sequence LFYCLGGITLTCFLIQVATGF. Heme c is bound at residue cysteine 35. Heme b contacts are provided by histidine 86 and histidine 100. 3 helical membrane-spanning segments follow: residues 90–110, 116–136, and 186–206; these read ASMMVLMMVLHVFRVYLTGGF, STWVTGVIMASCTVSFGVTGY, and LHTFVLPLLTAVFMLGHFLMI. The heme b site is built by histidine 187 and histidine 202.

The protein belongs to the cytochrome b family. PetB subfamily. The 4 large subunits of the cytochrome b6-f complex are cytochrome b6, subunit IV (17 kDa polypeptide, PetD), cytochrome f and the Rieske protein, while the 4 small subunits are PetG, PetL, PetM and PetN. The complex functions as a dimer. Heme b is required as a cofactor. Heme c serves as cofactor.

Its subcellular location is the plastid. It localises to the chloroplast thylakoid membrane. Its function is as follows. Component of the cytochrome b6-f complex, which mediates electron transfer between photosystem II (PSII) and photosystem I (PSI), cyclic electron flow around PSI, and state transitions. The chain is Cytochrome b6 from Bigelowiella natans (Pedinomonas minutissima).